Here is a 483-residue protein sequence, read N- to C-terminus: Putative (R)-citramalate synthase CimA (483 aa).

The region spanning Met-1–Tyr-245 is the Pyruvate carboxyltransferase domain.

Belongs to the alpha-IPM synthase/homocitrate synthase family. As to quaternary structure, homodimer.

It catalyses the reaction pyruvate + acetyl-CoA + H2O = (3R)-citramalate + CoA + H(+). Its pathway is amino-acid biosynthesis; L-isoleucine biosynthesis; 2-oxobutanoate from pyruvate: step 1/3. Its function is as follows. Catalyzes the condensation of pyruvate and acetyl-coenzyme A to form (R)-citramalate. This is Putative (R)-citramalate synthase CimA from Methanosarcina acetivorans (strain ATCC 35395 / DSM 2834 / JCM 12185 / C2A).